We begin with the raw amino-acid sequence, 88 residues long: Small cysteine-rich outer membrane protein OmcA (88 aa).

A signal peptide spans 1-18; the sequence is MKKTALLAALCSVVSLSS. The N-palmitoyl cysteine moiety is linked to residue Cys19. A lipid anchor (S-diacylglycerol cysteine) is attached at Cys19.

In terms of assembly, part of a disulfide cross-linked outer membrane complex (COMC) composed of the major outer membrane porin (MOMP), the small cysteine-rich protein (OmcA) and the large cysteine-rich periplasmic protein (OmcB).

The protein resides in the cell outer membrane. Functionally, in elementary bodies (EBs, the infectious stage, which is able to survive outside the host cell) provides the structural integrity of the outer envelope through disulfide cross-links with the large cysteine-rich periplasmic protein and the major outer membrane porin. It has been described in publications as the Sarkosyl-insoluble COMC (Chlamydia outer membrane complex), and serves as the functional equivalent of peptidoglycan. This Chlamydia trachomatis serovar B (strain Jali20/OT) protein is Small cysteine-rich outer membrane protein OmcA (omcA).